Here is a 140-residue protein sequence, read N- to C-terminus: Actin-depolymerizing factor 8 (140 aa).

At Ser-6 the chain carries Phosphoserine. One can recognise an ADF-H domain in the interval 7 to 139; the sequence is GMHVNDECKI…SLDIIKGRLN (133 aa).

Belongs to the actin-binding proteins ADF family. In terms of tissue distribution, expressed in the root trichoblast cells and developed root hairs.

The protein resides in the cytoplasm. It localises to the cytoskeleton. Actin-depolymerizing protein. Severs actin filaments (F-actin) and binds to actin monomers. This chain is Actin-depolymerizing factor 8 (ADF8), found in Arabidopsis thaliana (Mouse-ear cress).